The primary structure comprises 619 residues: Chaperone protein HscA homolog (619 aa).

It belongs to the heat shock protein 70 family.

In terms of biological role, chaperone involved in the maturation of iron-sulfur cluster-containing proteins. Has a low intrinsic ATPase activity which is markedly stimulated by HscB. This Haemophilus influenzae (strain 86-028NP) protein is Chaperone protein HscA homolog.